The sequence spans 992 residues: Vacuolar membrane protease (992 aa).

At 1 to 24 (MSPAMANPRVRKFNPIAFTPLPVT) the chain is on the cytoplasmic side. Residues 25–45 (FITTIVYLAVLILVLVTYLVV) form a helical membrane-spanning segment. Over 46-390 (PPAPTLEMSP…SAFAVFRLHT (345 aa)) the chain is Vacuolar. Asn-59, Asn-115, and Asn-118 each carry an N-linked (GlcNAc...) asparagine glycan. The Zn(2+) site is built by His-174 and Asp-186. The active-site Proton acceptor is the Glu-220. Zn(2+) is bound at residue Glu-221. Asn-237 is a glycosylation site (N-linked (GlcNAc...) asparagine). Positions 246 and 319 each coordinate Zn(2+). The helical transmembrane segment at 391-411 (LFALSVTLLVIGPLVLFITSI) threads the bilayer. At 412-446 (ALSKTDRMYLFSMSKSLGGASETVSLRGLRGLFRT) the chain is on the cytoplasmic side. Residues 447–467 (PIILTVTTVIPIGLAYLLEKI) form a helical membrane-spanning segment. Topologically, residues 468–474 (NPYIVHS) are vacuolar. A helical transmembrane segment spans residues 475 to 495 (SQFAVWSMMLSVWIFVAWFLA). The Cytoplasmic segment spans residues 496–508 (RVADFFRPSALHR). The helical transmembrane segment at 509-529 (AYSYTWIFIVTWIMLVISTVY) threads the bilayer. The Vacuolar portion of the chain corresponds to 530-533 (ANQK). Residues 534-554 (GIAAGYFTFFYFAAVFLATWV) traverse the membrane as a helical segment. The Cytoplasmic segment spans residues 555–671 (SYLELFSLPR…WSWTLPRWTW (117 aa)). A disordered region spans residues 579-620 (RSSSLSSRLLTPSADELPSDIGPNGAENVGDPDETDPTESTS). Residues 672-692 (ILQLLLLAPIVIILVGQVGLL) traverse the membrane as a helical segment. Over 693–708 (LTTAMSQIGSDGVSTF) the chain is Vacuolar. Residues 709–729 (IVYLACALFSTLLFAPLLPFI) traverse the membrane as a helical segment. The Cytoplasmic segment spans residues 730-736 (HRFTYHV). The helical transmembrane segment at 737-757 (PTFLLLIFIGTLIYNLVAFPF) threads the bilayer. The Vacuolar segment spans residues 758–992 (SPANRLKIFF…VEASHDFIIQ (235 aa)). Asn-805, Asn-846, and Asn-954 each carry an N-linked (GlcNAc...) asparagine glycan.

The protein belongs to the peptidase M28 family. Zn(2+) is required as a cofactor.

It localises to the vacuole membrane. In terms of biological role, may be involved in vacuolar sorting and osmoregulation. The chain is Vacuolar membrane protease from Paracoccidioides brasiliensis (strain Pb03).